The chain runs to 147 residues: NADH-quinone oxidoreductase subunit A (147 aa).

Transmembrane regions (helical) follow at residues 11-31 (IWPL…VMAL), 68-88 (LIAV…AWAV), and 93-113 (LGWP…AALA).

It belongs to the complex I subunit 3 family. NDH-1 is composed of 14 different subunits. Subunits NuoA, H, J, K, L, M, N constitute the membrane sector of the complex.

It is found in the cell inner membrane. The enzyme catalyses a quinone + NADH + 5 H(+)(in) = a quinol + NAD(+) + 4 H(+)(out). Its function is as follows. NDH-1 shuttles electrons from NADH, via FMN and iron-sulfur (Fe-S) centers, to quinones in the respiratory chain. The immediate electron acceptor for the enzyme in this species is believed to be ubiquinone. Couples the redox reaction to proton translocation (for every two electrons transferred, four hydrogen ions are translocated across the cytoplasmic membrane), and thus conserves the redox energy in a proton gradient. The sequence is that of NADH-quinone oxidoreductase subunit A from Nitrosospira multiformis (strain ATCC 25196 / NCIMB 11849 / C 71).